A 960-amino-acid chain; its full sequence is Protein mono-ADP-ribosyltransferase PARP10 (960 aa).

Glutamate 103 carries the ADP-ribosyl glutamic acid modification. A compositionally biased stretch (polar residues) spans 325-341 (SMGSTSPVDPVESSTEL). The tract at residues 325–346 (SMGSTSPVDPVESSTELPEQVG) is disordered. Phosphoserine occurs at positions 381 and 388. A disordered region spans residues 553 to 576 (SPHGGEDRVPLEMEKEKPGGPGET). Basic and acidic residues predominate over residues 555–570 (HGGEDRVPLEMEKEKP). Residues 604–621 (LEEEATLQLAIHRSLESQ) carry the Ubiquitin-interacting motif. Serine 617 is modified (phosphoserine). Residues 649-856 (DEDTGGEAQL…CAHGFNRSFC (208 aa)) are myc binding. Positions 755–960 (PNLSEQGLKE…TCKNILPGTP (206 aa)) constitute a PARP catalytic domain. The PIP-box motif lies at 780–787 (QDVVRAFY). Glutamate 831 carries the post-translational modification ADP-ribosyl glutamic acid.

The protein belongs to the ARTD/PARP family. In terms of assembly, interacts with MYC. Interacts with PARP14. Interacts (via-PIP box and ubiquitin-interacting motifs) with PCNA. Stimulated through its phosphorylation by CDK2. Acquires CDK-dependent phosphorylation through late-G1 to S phase, and from prometaphase to cytokinesis in the nucleolar organizing regions. Phosphorylation is suppressed in growth-arrested cells. Post-translationally, auto-mono-ADP-ribosylated on glutamate and lysine residues.

The protein localises to the cytoplasm. The protein resides in the nucleus. The catalysed reaction is L-lysyl-[protein] + NAD(+) = N(6)-(ADP-D-ribosyl)-L-lysyl-[protein] + nicotinamide + H(+). It carries out the reaction L-aspartyl-[protein] + NAD(+) = 4-O-(ADP-D-ribosyl)-L-aspartyl-[protein] + nicotinamide. The enzyme catalyses L-glutamyl-[protein] + NAD(+) = 5-O-(ADP-D-ribosyl)-L-glutamyl-[protein] + nicotinamide. Functionally, ADP-ribosyltransferase that mediates mono-ADP-ribosylation of glutamate and aspartate residues on target proteins. In contrast to PARP1 and PARP2, it is not able to mediate poly-ADP-ribosylation. Catalyzes mono-ADP-ribosylation of GSK3B, leading to negatively regulate GSK3B kinase activity. Involved in translesion DNA synthesis in response to DNA damage via its interaction with PCNA. This is Protein mono-ADP-ribosyltransferase PARP10 from Mus musculus (Mouse).